Consider the following 331-residue polypeptide: DNA-directed RNA polymerase subunit alpha (331 aa).

The interval 1-233 (MVREKVTVST…DLFIPFLHAE (233 aa)) is alpha N-terminal domain (alpha-NTD). The segment at 265–331 (KEIELKYIFI…GILEKHFTID (67 aa)) is alpha C-terminal domain (alpha-CTD).

The protein belongs to the RNA polymerase alpha chain family. In terms of assembly, in plastids the minimal PEP RNA polymerase catalytic core is composed of four subunits: alpha, beta, beta', and beta''. When a (nuclear-encoded) sigma factor is associated with the core the holoenzyme is formed, which can initiate transcription.

The protein resides in the plastid. Its subcellular location is the chloroplast. It carries out the reaction RNA(n) + a ribonucleoside 5'-triphosphate = RNA(n+1) + diphosphate. In terms of biological role, DNA-dependent RNA polymerase catalyzes the transcription of DNA into RNA using the four ribonucleoside triphosphates as substrates. The sequence is that of DNA-directed RNA polymerase subunit alpha from Vitis vinifera (Grape).